Consider the following 426-residue polypeptide: Pannexin-1 (426 aa).

Over 1-40 the chain is Cytoplasmic; the sequence is MAIAQLATEYVFSDFLLKEPTEPKFKGLRLELAVDKMVTC. The residue at position 40 (Cys-40) is an S-nitrosocysteine. The helical transmembrane segment at 41-61 threads the bilayer; sequence IAVGLPLLLISLAFAQEISIG. The Extracellular segment spans residues 62–106; that stretch reads TQISCFSPSSFSWRQAAFVDSYCWAAVQQKNSLQSESGNLPLWLH. 2 disulfides stabilise this stretch: Cys-66–Cys-265 and Cys-84–Cys-246. The chain crosses the membrane as a helical span at residues 107-127; sequence KFFPYILLLFAILLYLPPLFW. Over 128–217 the chain is Cytoplasmic; that stretch reads RFAAAPHICS…NLIIKYISCR (90 aa). Tyr-199 bears the Phosphotyrosine mark. The helical transmembrane segment at 218–238 threads the bilayer; it reads LLTLIIILLACIYLGYYFSLS. The Extracellular segment spans residues 239–266; the sequence is SLSDEFVCSIKSGILRNDSTVPDQFQCK. A glycan (N-linked (GlcNAc...) asparagine) is linked at Asn-255. The chain crosses the membrane as a helical span at residues 267–287; it reads LIAVGIFQLLSVINLVVYVLL. Topologically, residues 288–426 are cytoplasmic; sequence APVVVYTLFV…ARQRLLDSSC (139 aa). Position 347 is an S-nitrosocysteine (Cys-347). The segment covering 405-414 has biased composition (polar residues); that stretch reads DSETKANNGE. Positions 405–426 are disordered; that stretch reads DSETKANNGEKNARQRLLDSSC. The segment covering 415–426 has biased composition (basic and acidic residues); that stretch reads KNARQRLLDSSC.

Belongs to the pannexin family. Homoheptameric. Post-translationally, S-nitrosylation inhibits channel currents and ATP release. In terms of processing, N-glycosylation plays a role in cell surface targeting. Glycosylation at its extracellular surface makes unlikely that two oligomers could dock to form an intercellular channel such as in gap junctions. Exists in three glycosylation states: non-glycosylated (GLY0), high-mannose glycosylated (GLY1), and fully mature glycosylated (GLY2). Cleaved by CASP3 and CASP7 during apoptosis. Cleavage opens the channel for the release of metabolites and induces plasma membrane permeability during apoptosis. Post-translationally, phosphorylated at Tyr-199 by SRC. Phosphorylation activates ATP release. Constitutively phosphorylated in vascular smooth muscle cells. Widely expressed. Highest expression is observed in oocytes and brain. Detected at very low levels in sperm cells.

It is found in the cell membrane. The protein resides in the endoplasmic reticulum membrane. It carries out the reaction chloride(in) = chloride(out). It catalyses the reaction iodide(out) = iodide(in). The enzyme catalyses ATP(in) = ATP(out). The catalysed reaction is K(+)(in) = K(+)(out). It carries out the reaction Ca(2+)(in) = Ca(2+)(out). It catalyses the reaction Na(+)(in) = Na(+)(out). The enzyme catalyses nitrate(in) = nitrate(out). The catalysed reaction is L-aspartate(out) = L-aspartate(in). It carries out the reaction L-glutamate(out) = L-glutamate(in). It catalyses the reaction D-gluconate(in) = D-gluconate(out). The enzyme catalyses spermidine(in) = spermidine(out). Functionally, ion channel involved in a variety of physiological functions such as blood pressure regulation, apoptotic cell clearance and oogenesis. Forms anion-selective channels with relatively low conductance and an order of permeabilities: nitrate&gt;iodide&gt;chlroride&gt;&gt;aspartate=glutamate=gluconate. Can release ATP upon activation through phosphorylation or cleavage at C-terminus. May play a role as a Ca(2+)-leak channel to regulate ER Ca(2+) homeostasis. During apoptosis, the C terminal tail is cleaved by caspases, which opens the main pore acting as a large-pore ATP efflux channel with a broad distribution, which allows the regulated release of molecules and ions smaller than 1 kDa, such as nucleotides ATP and UTP, and selective plasma membrane permeability to attract phagocytes that engulf the dying cells. This Homo sapiens (Human) protein is Pannexin-1.